The sequence spans 254 residues: Sugar fermentation stimulation protein homolog (254 aa).

Belongs to the SfsA family.

This is Sugar fermentation stimulation protein homolog from Synechococcus sp. (strain CC9605).